Here is a 134-residue protein sequence, read N- to C-terminus: uncharacterized protein (134 aa).

A signal peptide spans 1–37 (MSYIKRDHTALRDIAMKTFLKVVGLAASLSAASVAFS).

This is an uncharacterized protein from Coxiella burnetii (strain RSA 493 / Nine Mile phase I).